The sequence spans 220 residues: Glycerol-3-phosphate acyltransferase (220 aa).

A run of 6 helical transmembrane segments spans residues Ile11–Leu31, Leu70–Phe90, Leu96–Phe116, Gly127–Val147, Ile153–Pro173, and Met193–Ala213.

The protein belongs to the PlsY family. In terms of assembly, probably interacts with PlsX.

The protein localises to the cell inner membrane. It carries out the reaction an acyl phosphate + sn-glycerol 3-phosphate = a 1-acyl-sn-glycero-3-phosphate + phosphate. The protein operates within lipid metabolism; phospholipid metabolism. Catalyzes the transfer of an acyl group from acyl-phosphate (acyl-PO(4)) to glycerol-3-phosphate (G3P) to form lysophosphatidic acid (LPA). This enzyme utilizes acyl-phosphate as fatty acyl donor, but not acyl-CoA or acyl-ACP. The chain is Glycerol-3-phosphate acyltransferase from Helicobacter pylori (strain HPAG1).